We begin with the raw amino-acid sequence, 147 residues long: D-aminoacyl-tRNA deacylase (147 aa).

Residues 136–137 (GP) carry the Gly-cisPro motif, important for rejection of L-amino acids motif.

It belongs to the DTD family. As to quaternary structure, homodimer.

It is found in the cytoplasm. It catalyses the reaction glycyl-tRNA(Ala) + H2O = tRNA(Ala) + glycine + H(+). It carries out the reaction a D-aminoacyl-tRNA + H2O = a tRNA + a D-alpha-amino acid + H(+). In terms of biological role, an aminoacyl-tRNA editing enzyme that deacylates mischarged D-aminoacyl-tRNAs. Also deacylates mischarged glycyl-tRNA(Ala), protecting cells against glycine mischarging by AlaRS. Acts via tRNA-based rather than protein-based catalysis; rejects L-amino acids rather than detecting D-amino acids in the active site. By recycling D-aminoacyl-tRNA to D-amino acids and free tRNA molecules, this enzyme counteracts the toxicity associated with the formation of D-aminoacyl-tRNA entities in vivo and helps enforce protein L-homochirality. This is D-aminoacyl-tRNA deacylase from Streptococcus pyogenes serotype M6 (strain ATCC BAA-946 / MGAS10394).